The following is a 284-amino-acid chain: Proteasome subunit pbs-5 (284 aa).

A propeptide spans 1–64 (MWGETFDDFE…AGKSMQFRKG (64 aa)) (removed in mature form). T65 acts as the Nucleophile in catalysis.

This sequence belongs to the peptidase T1B family. As to quaternary structure, the 26S proteasome consists of a 20S proteasome core and two 19S regulatory subunits. The 20S proteasome core is composed of 28 subunits that are arranged in four stacked rings, resulting in a barrel-shaped structure. The two end rings are each formed by seven alpha subunits, and the two central rings are each formed by seven beta subunits. The catalytic chamber with the active sites is on the inside of the barrel.

The protein localises to the cytoplasm. It is found in the nucleus. The catalysed reaction is Cleavage of peptide bonds with very broad specificity.. Component of the 20S core proteasome complex involved in the proteolytic degradation of most intracellular proteins. This complex plays numerous essential roles within the cell by associating with different regulatory particles. Associated with two 19S regulatory particles, forms the 26S proteasome and thus participates in the ATP-dependent degradation of ubiquitinated proteins. The 26S proteasome plays a key role in the maintenance of protein homeostasis by removing misfolded or damaged proteins that could impair cellular functions, and by removing proteins whose functions are no longer required. The chain is Proteasome subunit pbs-5 from Caenorhabditis elegans.